Reading from the N-terminus, the 270-residue chain is MLLASPSTPSRGRTPSAVERLEADKAKYVKTHQVIARRQEPALRGGPGPLTPHTCNELGPPPSPRTPRPARRGSGRRLPRPDSLIFYRQKRDCKASVNKENAKGQGLVRRLFLGSPRDVASSSAGSSERPAAPGGWTAPQDAPEAAGKRALCPTCSLPLSEKERFFNYCGLERALVEVLGAERFSPQSWGADASPQPGTSPPPGSGDASDWTSSEGGADRRDGAEGGGSAAAGSERDGRPQVSVVERNARVIQWLYGCQRARGPPRESEV.

The segment covering 1 to 16 (MLLASPSTPSRGRTPS) has biased composition (low complexity). 3 disordered regions span residues 1-83 (MLLA…RPDS), 117-142 (RDVASSSAGSSERPAAPGGWTAPQDA), and 186-244 (PQSW…QVSV). Positions 68–78 (RPARRGSGRRL) are enriched in basic residues.

Belongs to the FAM110 family.

In Bos taurus (Bovine), this protein is Protein FAM110D (FAM110D).